Here is a 396-residue protein sequence, read N- to C-terminus: N-acetylglucosamine-6-phosphate deacetylase (396 aa).

Residues His63, His65, and Glu136 each contribute to the Fe cation site. A substrate-binding site is contributed by 147 to 148; the sequence is AQ. Fe cation contacts are provided by His202 and His223. Residues 226-227, Arg234, and 255-258 each bind substrate; these read NA and DGIH. Position 281 (Asp281) interacts with Fe cation. Asp281 (proton donor) is an active-site residue. 314–316 serves as a coordination point for substrate; sequence LAG.

The protein belongs to the metallo-dependent hydrolases superfamily. NagA family. Homodimer. Requires a divalent metal cation as cofactor.

The catalysed reaction is N-acetyl-D-glucosamine 6-phosphate + H2O = D-glucosamine 6-phosphate + acetate. It functions in the pathway amino-sugar metabolism; N-acetylneuraminate degradation; D-fructose 6-phosphate from N-acetylneuraminate: step 4/5. Its function is as follows. Involved in the first committed step in the biosynthesis of amino-sugar-nucleotides. Catalyzes the hydrolysis of the N-acetyl group of N-acetylglucosamine-6-phosphate (GlcNAc-6-P) to yield glucosamine 6-phosphate and acetate. Essential for growth on N-acetylglucosamine. The chain is N-acetylglucosamine-6-phosphate deacetylase (nagA) from Bacillus subtilis (strain 168).